The following is a 164-amino-acid chain: Large ribosomal subunit protein uL10 (164 aa).

Belongs to the universal ribosomal protein uL10 family. As to quaternary structure, part of the ribosomal stalk of the 50S ribosomal subunit. The N-terminus interacts with L11 and the large rRNA to form the base of the stalk. The C-terminus forms an elongated spine to which L12 dimers bind in a sequential fashion forming a multimeric L10(L12)X complex.

Functionally, forms part of the ribosomal stalk, playing a central role in the interaction of the ribosome with GTP-bound translation factors. This is Large ribosomal subunit protein uL10 from Chromobacterium violaceum (strain ATCC 12472 / DSM 30191 / JCM 1249 / CCUG 213 / NBRC 12614 / NCIMB 9131 / NCTC 9757 / MK).